A 61-amino-acid polypeptide reads, in one-letter code: MDIKQLREKSADELKAHLTDLRKEQFSLRMQQVTGQLPKTHETRRVRREIARVKHLLGSTK.

This sequence belongs to the universal ribosomal protein uL29 family.

This Xanthomonas euvesicatoria pv. vesicatoria (strain 85-10) (Xanthomonas campestris pv. vesicatoria) protein is Large ribosomal subunit protein uL29.